The chain runs to 160 residues: Small ribosomal subunit protein bS6 (160 aa).

Belongs to the bacterial ribosomal protein bS6 family.

In terms of biological role, binds together with bS18 to 16S ribosomal RNA. This Ureaplasma parvum serovar 3 (strain ATCC 27815 / 27 / NCTC 11736) protein is Small ribosomal subunit protein bS6.